The primary structure comprises 441 residues: Ribulose bisphosphate carboxylase large chain (441 aa).

Positions 89 and 139 each coordinate substrate. Lys-141 functions as the Proton acceptor in the catalytic mechanism. Lys-143 lines the substrate pocket. Residues Lys-167, Asp-169, and Glu-170 each coordinate Mg(2+). The residue at position 167 (Lys-167) is an N6-carboxylysine. His-260 serves as the catalytic Proton acceptor. Positions 261, 293, and 345 each coordinate substrate.

The protein belongs to the RuBisCO large chain family. Type I subfamily. In terms of assembly, heterohexadecamer of 8 large chains and 8 small chains; disulfide-linked. The disulfide link is formed within the large subunit homodimers. Requires Mg(2+) as cofactor. The disulfide bond which can form in the large chain dimeric partners within the hexadecamer appears to be associated with oxidative stress and protein turnover.

It is found in the plastid. Its subcellular location is the chloroplast. It catalyses the reaction 2 (2R)-3-phosphoglycerate + 2 H(+) = D-ribulose 1,5-bisphosphate + CO2 + H2O. The enzyme catalyses D-ribulose 1,5-bisphosphate + O2 = 2-phosphoglycolate + (2R)-3-phosphoglycerate + 2 H(+). RuBisCO catalyzes two reactions: the carboxylation of D-ribulose 1,5-bisphosphate, the primary event in carbon dioxide fixation, as well as the oxidative fragmentation of the pentose substrate in the photorespiration process. Both reactions occur simultaneously and in competition at the same active site. This is Ribulose bisphosphate carboxylase large chain from Viola sororia (Woolly blue violet).